Here is a 492-residue protein sequence, read N- to C-terminus: 2-succinylbenzoate--CoA ligase (492 aa).

Belongs to the ATP-dependent AMP-binding enzyme family. MenE subfamily.

It catalyses the reaction 2-succinylbenzoate + ATP + CoA = 2-succinylbenzoyl-CoA + AMP + diphosphate. Its pathway is quinol/quinone metabolism; 1,4-dihydroxy-2-naphthoate biosynthesis; 1,4-dihydroxy-2-naphthoate from chorismate: step 5/7. The protein operates within quinol/quinone metabolism; menaquinone biosynthesis. Converts 2-succinylbenzoate (OSB) to 2-succinylbenzoyl-CoA (OSB-CoA). The polypeptide is 2-succinylbenzoate--CoA ligase (Staphylococcus aureus (strain bovine RF122 / ET3-1)).